Reading from the N-terminus, the 430-residue chain is 3-phosphoshikimate 1-carboxyvinyltransferase (430 aa).

Residues 1–20 form a disordered region; sequence MHATVSPSRVRGRARAPPSK. 3-phosphoshikimate-binding residues include Lys-20, Ser-21, and Arg-25. Lys-20 serves as a coordination point for phosphoenolpyruvate. Residues Gly-91 and Arg-119 each contribute to the phosphoenolpyruvate site. Residues Ser-164, Ser-165, Gln-166, Ser-192, Asp-312, and Lys-339 each contribute to the 3-phosphoshikimate site. Gln-166 provides a ligand contact to phosphoenolpyruvate. The Proton acceptor role is filled by Asp-312. Phosphoenolpyruvate contacts are provided by Arg-343 and Arg-386.

It belongs to the EPSP synthase family. As to quaternary structure, monomer.

The protein resides in the cytoplasm. The enzyme catalyses 3-phosphoshikimate + phosphoenolpyruvate = 5-O-(1-carboxyvinyl)-3-phosphoshikimate + phosphate. The protein operates within metabolic intermediate biosynthesis; chorismate biosynthesis. Its function is as follows. Catalyzes the transfer of the enolpyruvyl moiety of phosphoenolpyruvate (PEP) to the 5-hydroxyl of shikimate-3-phosphate (S3P) to produce enolpyruvyl shikimate-3-phosphate and inorganic phosphate. This chain is 3-phosphoshikimate 1-carboxyvinyltransferase, found in Halobacterium salinarum (strain ATCC 29341 / DSM 671 / R1).